The sequence spans 920 residues: Glutamate receptor 2.2 (920 aa).

The N-terminal stretch at 1 to 24 is a signal peptide; sequence MKNSKLFFRFLFLFFFFCLESSRG. At 25–580 the chain is on the extracellular side; it reads QDNGKTQVNI…DKFSFLKPLS (556 aa). N-linked (GlcNAc...) asparagine glycosylation is found at Asn53, Asn204, Asn267, Asn331, Asn342, Asn477, and Asn542. Residues 581–601 traverse the membrane as a helical segment; sequence IELWLTTLVFFFLVGISVWTL. The Cytoplasmic segment spans residues 602-610; the sequence is EHRVNSDFR. The helical transmembrane segment at 611 to 631 threads the bilayer; the sequence is GPANYQASTIFWFAFSTMVFA. Over 632–635 the chain is Cytoplasmic; it reads PRER. Residues 636–656 form a helical membrane-spanning segment; the sequence is VLSFGARSLVVTWYFVLLVLT. Residues 657–830 lie on the Extracellular side of the membrane; the sequence is QSYTASLASL…VTAIQLGVGS (174 aa). Asn702 is a glycosylation site (N-linked (GlcNAc...) asparagine). A helical transmembrane segment spans residues 831–851; that stretch reads FWFLFLVVFVVCVLALGKFTF. Over 852-920 the chain is Cytoplasmic; the sequence is CFLWKTKGKD…QVNQTDPDCL (69 aa).

It belongs to the glutamate-gated ion channel (TC 1.A.10.1) family. As to quaternary structure, may form heteromers. Expressed predominantly in roots.

It is found in the membrane. Functionally, glutamate-gated receptor that probably acts as a non-selective cation channel. May be involved in light-signal transduction and calcium homeostasis via the regulation of calcium influx into cells. The protein is Glutamate receptor 2.2 (GLR2.2) of Arabidopsis thaliana (Mouse-ear cress).